A 203-amino-acid chain; its full sequence is MSSKLRVGVAGPVGSGKTALVETLCLSLKKNYEIAIVTNDIFTKEDANFLINKKVLEEGRIIGVETGGCPHTAIREDCSLNKNAVLDLENKYNPLDFVFVESGGDNLASSFSPELVDLSIYVIDVSAGDKIPRKGGPGITRSDLLLINKIDLADKVGADLNIMKSDTEFMRKGKPWFFTNLSIGIGVEEITQFLESHIPNNRN.

Residue 11–18 (GPVGSGKT) participates in GTP binding.

The protein belongs to the SIMIBI class G3E GTPase family. UreG subfamily. As to quaternary structure, homodimer. UreD, UreF and UreG form a complex that acts as a GTP-hydrolysis-dependent molecular chaperone, activating the urease apoprotein by helping to assemble the nickel containing metallocenter of UreC. The UreE protein probably delivers the nickel.

It localises to the cytoplasm. Functionally, facilitates the functional incorporation of the urease nickel metallocenter. This process requires GTP hydrolysis, probably effectuated by UreG. This is Urease accessory protein UreG from Prochlorococcus marinus (strain MIT 9301).